The sequence spans 152 residues: Superoxide dismutase [Cu-Zn] 4AP (152 aa).

Cu cation-binding residues include His-45, His-47, and His-62. Cys-56 and Cys-145 form a disulfide bridge. Zn(2+) contacts are provided by His-62, His-70, His-79, and Asp-82. His-119 is a Cu cation binding site.

Belongs to the Cu-Zn superoxide dismutase family. As to quaternary structure, homodimer. It depends on Cu cation as a cofactor. Requires Zn(2+) as cofactor.

It localises to the cytoplasm. It carries out the reaction 2 superoxide + 2 H(+) = H2O2 + O2. In terms of biological role, destroys radicals which are normally produced within the cells and which are toxic to biological systems. The sequence is that of Superoxide dismutase [Cu-Zn] 4AP (SODCC.2) from Zea mays (Maize).